The primary structure comprises 320 residues: Acetyl-coenzyme A carboxylase carboxyl transferase subunit alpha (320 aa).

Positions 42–295 (IGDKAAQALK…GDAIAEAFND (254 aa)) constitute a CoA carboxyltransferase C-terminal domain.

Belongs to the AccA family. In terms of assembly, acetyl-CoA carboxylase is a heterohexamer composed of biotin carboxyl carrier protein (AccB), biotin carboxylase (AccC) and two subunits each of ACCase subunit alpha (AccA) and ACCase subunit beta (AccD).

Its subcellular location is the cytoplasm. It carries out the reaction N(6)-carboxybiotinyl-L-lysyl-[protein] + acetyl-CoA = N(6)-biotinyl-L-lysyl-[protein] + malonyl-CoA. Its pathway is lipid metabolism; malonyl-CoA biosynthesis; malonyl-CoA from acetyl-CoA: step 1/1. Component of the acetyl coenzyme A carboxylase (ACC) complex. First, biotin carboxylase catalyzes the carboxylation of biotin on its carrier protein (BCCP) and then the CO(2) group is transferred by the carboxyltransferase to acetyl-CoA to form malonyl-CoA. The polypeptide is Acetyl-coenzyme A carboxylase carboxyl transferase subunit alpha (Nitrobacter hamburgensis (strain DSM 10229 / NCIMB 13809 / X14)).